The sequence spans 261 residues: X-box-binding protein 1 (261 aa).

The Cytoplasmic portion of the chain corresponds to Met-1–Asn-185. The span at Thr-27–Pro-37 shows a compositional bias: low complexity. Positions Thr-27 to Thr-65 are disordered. 2 positions are modified to phosphoserine: Ser-47 and Ser-68. The region spanning Glu-70–Leu-133 is the bZIP domain. Residues Lys-72–Arg-94 are basic motif. The segment at Arg-76–Lys-92 is nuclear localization signal (NLS). The tract at residues Leu-98 to Leu-133 is leucine-zipper. A helical; Signal-anchor for type II membrane protein membrane pass occupies residues Ile-186–Ser-203. The Lumenal segment spans residues Cys-204 to Asn-261.

This sequence belongs to the bZIP family. In terms of assembly, isoform 1 interacts with HM13. Isoform 1 interacts with RNF139; the interaction induces ubiquitination and degradation of isoform 1. Isoform 1 interacts (via luminal domain) with DERL1; the interaction obviates the need for ectodomain shedding prior HM13/SPP-mediated XBP1 isoform 1 cleavage. Isoform 1 interacts with HDAC3 and AKT1; the interactions occur in endothelial cell (EC) under disturbed flow. Isoform 1 interacts with the oncoprotein FOS. Interacts with SIRT1. In terms of processing, isoform 1 is ubiquitinated, leading to proteasome-mediated degradation in response to ER stress. X-box-binding protein 1, cytoplasmic form and luminal form are produced by intramembrane proteolytic cleavage of ER membrane-anchored isoform 1 triggered by HM13/SPP in a DERL1-RNF139-dependent and VCP/p97-independent manner. X-box-binding protein 1, luminal form is ubiquitinated leading to proteasomal degradation. Post-translationally, acetylated by EP300; acetylation positively regulates the transcriptional activity of XBP1. Deacetylated by SIRT1; deacetylation negatively regulates the transcriptional activity of XBP1.

The protein localises to the nucleus. The protein resides in the endoplasmic reticulum. Its subcellular location is the cytoplasm. It localises to the endoplasmic reticulum membrane. It is found in the membrane. Functions as a transcription factor during endoplasmic reticulum (ER) stress by regulating the unfolded protein response (UPR). Required for cardiac myogenesis and hepatogenesis during embryonic development, and the development of secretory tissues such as exocrine pancreas and salivary gland. Involved in terminal differentiation of B lymphocytes to plasma cells and production of immunoglobulins. Modulates the cellular response to ER stress in a PIK3R-dependent manner. Binds to the cis-acting X box present in the promoter regions of major histocompatibility complex class II genes. Involved in VEGF-induced endothelial cell (EC) proliferation and retinal blood vessel formation during embryonic development but also for angiogenesis in adult tissues under ischemic conditions. Functions also as a major regulator of the UPR in obesity-induced insulin resistance and type 2 diabetes for the management of obesity and diabetes prevention. In terms of biological role, acts as a weak transcriptional factor. Together with HDAC3, contributes to the activation of NFE2L2-mediated HMOX1 transcription factor gene expression in a PI(3)K/mTORC2/Akt-dependent signaling pathway leading to EC survival under disturbed flow/oxidative stress. Binds to the ER stress response element (ERSE) upon ER stress. Binds to the consensus 5'-GATGACGTG[TG]N(3)[AT]T-3' sequence related to cAMP responsive element (CRE)-like sequences. Associates preferentially to the HDAC3 gene promoter region in a static flow-dependent manner. Binds to the CDH5/VE-cadherin gene promoter region. This chain is X-box-binding protein 1, found in Bos taurus (Bovine).